We begin with the raw amino-acid sequence, 335 residues long: MAKRYLLDFEKPLVELEKQIEQIKELARDSEVDVSQQLLQLETLAARRREEIFKSLTPAQKIQVARHPQRPSTLDFVQMFCDDWIELHGDRNGGDDMALIGGIGSINNRPVLMLGHQKGRDTKENVVRNFGMAKPGGYRKALRLMQHANRFALPILTFIDTPGAYAGLKAEEQGQGEAIARNLREMFGLKVPIVATVIGEGGSGGALGIGVADRLLMFEHSVYTVASPEACASILWRDAAKAPEAASALKITGNDLLKLGIIDEVLPEPSGGNNWAPLDAGNTLKEAIEKHLNALLQMPEDQLIEERYKKFRILGKFIEANNIEEIYSEIPQKTE.

A CoA carboxyltransferase C-terminal domain is found at 40–294 (QLETLAARRR…KEAIEKHLNA (255 aa)).

Belongs to the AccA family. Acetyl-CoA carboxylase is a heterohexamer composed of biotin carboxyl carrier protein (AccB), biotin carboxylase (AccC) and two subunits each of ACCase subunit alpha (AccA) and ACCase subunit beta (AccD).

The protein resides in the cytoplasm. It catalyses the reaction N(6)-carboxybiotinyl-L-lysyl-[protein] + acetyl-CoA = N(6)-biotinyl-L-lysyl-[protein] + malonyl-CoA. It participates in lipid metabolism; malonyl-CoA biosynthesis; malonyl-CoA from acetyl-CoA: step 1/1. Component of the acetyl coenzyme A carboxylase (ACC) complex. First, biotin carboxylase catalyzes the carboxylation of biotin on its carrier protein (BCCP) and then the CO(2) group is transferred by the carboxyltransferase to acetyl-CoA to form malonyl-CoA. The protein is Acetyl-coenzyme A carboxylase carboxyl transferase subunit alpha of Prochlorococcus marinus (strain AS9601).